Consider the following 838-residue polypeptide: MPAERPAGSGGSEAPAMVEQLDTAVITPAMLEEEEQLEAAGLERERKMLEKARMSWDRESTEIRYRRLQHLLEKSNIYSKFLLTKMEQQQLEEQKKKEKLERKKESLKVKKGKNSIDASEEKPVMRKKRGREDESYNISEVMSKEEILSVAKKNKKENEDENSSSTNLCVEDLQKNKDSNSIIKDRLSETVRQNTKFFFDPVRKCNGQPVPFQQPKHFTGGVMRWYQVEGMEWLRMLWENGINGILADEMGLGKTVQCIATIALMIQRGVPGPFLVCGPLSTLPNWMAEFKRFTPDIPTMLYHGTQEERQKLVRNIYKRKGTLQIHPVVITSFEIAMRDRNALQHCYWKYLIVDEGHRIKNMKCRLIRELKRFNADNKLLLTGTPLQNNLSELWSLLNFLLPDVFDDLKSFESWFDITSLSETAEDIIAKEREQNVLHMLHQILTPFLLRRLKSDVALEVPPKREVVVYAPLSKKQEIFYTAIVNRTIANMFGSSEKETIELSPTGRPKRRTRKSINYSKIDDFPNELEKLISQIQPEVDRERAVVEVNIPVESEVNLKLQNIMMLLRKCCNHPYLIEYPIDPVTQEFKIDEELVTNSGKFLILDRMLPELKKRGHKVLLFSQMTSMLDILMDYCHLRDFNFSRLDGSMSYSEREKNMHSFNTDPEVFIFLVSTRAGGLGINLTAADTVIIYDSDWNPQSDLQAQDRCHRIGQTKPVVVYRLVTANTIDQKIVERAAAKRKLEKLIIHKNHFKGGQSGLNLSKNFLDPKELMELLKSRDYEREIKGSREKVISDKDLELLLDRSDLIDQMNASGPIKEKMGIFKILENSEDSSPECLF.

Residues 30–115 (MLEEEEQLEA…SLKVKKGKNS (86 aa)) are a coiled coil. Residues 94-108 (QKKKEKLERKKESLK) are compositionally biased toward basic and acidic residues. The segment at 94–135 (QKKKEKLERKKESLKVKKGKNSIDASEEKPVMRKKRGREDES) is disordered. At Ser115 the chain carries Phosphoserine. A compositionally biased stretch (basic and acidic residues) spans 119–134 (SEEKPVMRKKRGREDE). One can recognise a Helicase ATP-binding domain in the interval 235-403 (RMLWENGING…WSLLNFLLPD (169 aa)). 248-255 (DEMGLGKT) contributes to the ATP binding site. The DEAH box signature appears at 354–357 (DEGH). Residues Ser503 and Ser515 each carry the phosphoserine modification. One can recognise a Helicase C-terminal domain in the interval 603-767 (ILDRMLPELK…GLNLSKNFLD (165 aa)).

Belongs to the SNF2/RAD54 helicase family. Highly expressed in proliferative tissues such as adult thymus and testis, and expressed at lower levels in uterus, small intestine, colon, and peripheral blood mononuclear cells. Also expressed in neoplastic cell lines including those derived from myeloid and lymphoid leukemias.

The protein localises to the nucleus. In terms of biological role, plays an essential role in normal development and survival. Involved in regulation of the expansion or survival of lymphoid cells. Required for de novo or maintenance DNA methylation. May control silencing of the imprinted CDKN1C gene through DNA methylation. May play a role in formation and organization of heterochromatin, implying a functional role in the regulation of transcription and mitosis. This Homo sapiens (Human) protein is Lymphoid-specific helicase.